The following is a 98-amino-acid chain: Protein FAM24A (98 aa).

The first 29 residues, 1-29 (MFDLRTKVMIGIASTLLIAAIVLITVVFC), serve as a signal peptide directing secretion.

Belongs to the FAM24 family.

The protein localises to the secreted. This is Protein FAM24A (Fam24a) from Rattus norvegicus (Rat).